A 380-amino-acid chain; its full sequence is Oocyte-specific homeobox protein 4 (380 aa).

Disordered regions lie at residues 1 to 25, 43 to 95, 152 to 182, 234 to 303, and 339 to 380; these read MSKD…SFLV, VTPT…RKCR, KSSQ…FAAS, PRQK…CQTP, and TRSK…SSAY. Residues 43–53 show a composition bias toward polar residues; sequence VTPTRPLQSSH. Residues 54 to 67 are compositionally biased toward basic and acidic residues; sequence SVHERDLHQKDSQE. A DNA-binding region (homeobox) is located at residues 94 to 153; that stretch reads CRKERTVYSKEQKCLLQEHFHQCQNPDLEQRKALALLIGVTEYKIQTWFKNRRAKECRKS. A compositionally biased stretch (basic and acidic residues) spans 234 to 250; it reads PRQKCRELSREPGHLSS. Positions 260–271 are enriched in low complexity; sequence SSPSPAAGAESS. Composition is skewed to polar residues over residues 278–302 and 351–380; these read LSLS…MCQT and NTVQ…SSAY.

It belongs to the paired homeobox family. Obox subfamily. Specifically expressed in early embryos.

The protein localises to the nucleus. Transcription factor required for zygotic genome activation (ZGA), a critical event in early embryonic development during which the developmental control passes from maternally provided mRNAs to the expression of the zygotic genome after fertilization. Cannot compensate for loss of other members of the Obox family, suggesting that its function differs from other Obox family members. May regulate expression of histone genes in embryonic stem cells. Also involved in completion of meiosis of oocytes during the meiosis-I/meiosis-II transition. Required to maintain the nuclear membrane of the germinal vesicle in oocytes. This Mus musculus (Mouse) protein is Oocyte-specific homeobox protein 4.